The sequence spans 98 residues: Late cornified envelope-like proline-rich protein 1 (98 aa).

Positions 1 to 26 (MSSDDKSKSNDPKTEPKNCDPKCEQK) are disordered.

Belongs to the cornifin (SPRR) family.

The protein is Late cornified envelope-like proline-rich protein 1 (LELP1) of Homo sapiens (Human).